A 281-amino-acid chain; its full sequence is MAIKKFKAYTNGRRNMSSLDYQANLTGHAPEKSLLVALPTKAGRNNQGKITTRHQGGRLKRFYRIIDFKRQKDGIPATVKTIEYDPNRSANISLVVYRDGEKRYILSPKGIKIGQVILSGDNVDIQVGNHLPLANIPEGTFVHNIELQPRQGGIIARSAGSSAQILGKDESGRYVILRLKSGEVRKVLAINRATVGEVGNEEHSLVNIGKAGRNRLRGIRPTVRGSAMNPNDHPHGGGEGRQPIGRKSPMTPWGKRALGVKTRATKKASNQFIIRRRKETK.

A disordered region spans residues 222 to 281; it reads TVRGSAMNPNDHPHGGGEGRQPIGRKSPMTPWGKRALGVKTRATKKASNQFIIRRRKETK.

Belongs to the universal ribosomal protein uL2 family. As to quaternary structure, part of the 50S ribosomal subunit. Forms a bridge to the 30S subunit in the 70S ribosome.

Functionally, one of the primary rRNA binding proteins. Required for association of the 30S and 50S subunits to form the 70S ribosome, for tRNA binding and peptide bond formation. It has been suggested to have peptidyltransferase activity; this is somewhat controversial. Makes several contacts with the 16S rRNA in the 70S ribosome. The chain is Large ribosomal subunit protein uL2 from Metamycoplasma hominis (strain ATCC 23114 / DSM 25592 / NBRC 14850 / NCTC 10111 / PG21) (Mycoplasma hominis).